A 95-amino-acid chain; its full sequence is Oxytetracycline polyketide synthase acyl carrier protein (95 aa).

A Carrier domain is found at 3 to 81 (LLTLSDLLTL…ALIEMTNASL (79 aa)). O-(pantetheine 4'-phosphoryl)serine is present on serine 41.

Post-translationally, 4'-phosphopantetheine is transferred from CoA to a specific serine of the apo-ACP-like protein.

Its pathway is antibiotic biosynthesis; oxytetracycline biosynthesis. Acyl carrier protein. The polypeptide is Oxytetracycline polyketide synthase acyl carrier protein (Streptomyces rimosus).